The chain runs to 341 residues: tRNA N6-adenosine threonylcarbamoyltransferase (341 aa).

The Fe cation site is built by His-115 and His-119. Residues 138 to 142, Asp-171, Gly-184, and Asn-276 contribute to the substrate site; that span reads LVSGG. Position 304 (Asp-304) interacts with Fe cation.

It belongs to the KAE1 / TsaD family. Fe(2+) serves as cofactor.

Its subcellular location is the cytoplasm. The enzyme catalyses L-threonylcarbamoyladenylate + adenosine(37) in tRNA = N(6)-L-threonylcarbamoyladenosine(37) in tRNA + AMP + H(+). In terms of biological role, required for the formation of a threonylcarbamoyl group on adenosine at position 37 (t(6)A37) in tRNAs that read codons beginning with adenine. Is involved in the transfer of the threonylcarbamoyl moiety of threonylcarbamoyl-AMP (TC-AMP) to the N6 group of A37, together with TsaE and TsaB. TsaD likely plays a direct catalytic role in this reaction. The protein is tRNA N6-adenosine threonylcarbamoyltransferase of Stenotrophomonas maltophilia (strain K279a).